The primary structure comprises 101 residues: Small ribosomal subunit protein uS14 (101 aa).

Belongs to the universal ribosomal protein uS14 family. Part of the 30S ribosomal subunit. Contacts proteins S3 and S10.

Functionally, binds 16S rRNA, required for the assembly of 30S particles and may also be responsible for determining the conformation of the 16S rRNA at the A site. This is Small ribosomal subunit protein uS14 from Roseobacter denitrificans (strain ATCC 33942 / OCh 114) (Erythrobacter sp. (strain OCh 114)).